Consider the following 226-residue polypeptide: Enolase-phosphatase E1 (226 aa).

It belongs to the HAD-like hydrolase superfamily. MasA/MtnC family. In terms of assembly, monomer. Requires Mg(2+) as cofactor.

The catalysed reaction is 5-methylsulfanyl-2,3-dioxopentyl phosphate + H2O = 1,2-dihydroxy-5-(methylsulfanyl)pent-1-en-3-one + phosphate. The protein operates within amino-acid biosynthesis; L-methionine biosynthesis via salvage pathway; L-methionine from S-methyl-5-thio-alpha-D-ribose 1-phosphate: step 3/6. It participates in amino-acid biosynthesis; L-methionine biosynthesis via salvage pathway; L-methionine from S-methyl-5-thio-alpha-D-ribose 1-phosphate: step 4/6. Its function is as follows. Bifunctional enzyme that catalyzes the enolization of 2,3-diketo-5-methylthiopentyl-1-phosphate (DK-MTP-1-P) into the intermediate 2-hydroxy-3-keto-5-methylthiopentenyl-1-phosphate (HK-MTPenyl-1-P), which is then dephosphorylated to form the acireductone 1,2-dihydroxy-3-keto-5-methylthiopentene (DHK-MTPene). The chain is Enolase-phosphatase E1 from Shewanella baltica (strain OS155 / ATCC BAA-1091).